The sequence spans 501 residues: Calcium-dependent protein kinase 4 (501 aa).

Residues 25–283 (YLLGKKLGQG…AHEALCHPWI (259 aa)) enclose the Protein kinase domain. Residues 31 to 39 (LGQGQFGTT) and Lys54 each bind ATP. The Proton acceptor role is filled by Asp149. Ser189 bears the Phosphoserine mark. Positions 289-319 (APDKPLDPAVLSRLKQFSQMNKIKKMALRVI) are autoinhibitory domain. 4 consecutive EF-hand domains span residues 326 to 361 (EEIG…VGSE), 362 to 397 (LMES…INKM), 398 to 433 (EREE…FGLC), and 437 to 467 (LDDM…GDGV). Asp339, Asp341, Ser343, Thr345, Glu350, Asp375, Asp377, Ser379, Thr381, Glu386, Asp411, Asp413, Ser415, Tyr417, Glu422, Asp445, Asp447, Asp449, Lys451, and Glu456 together coordinate Ca(2+).

This sequence belongs to the protein kinase superfamily. Ser/Thr protein kinase family. CDPK subfamily. As to quaternary structure, interacts with Di19.

The protein resides in the cytoplasm. Its subcellular location is the nucleus. It carries out the reaction L-seryl-[protein] + ATP = O-phospho-L-seryl-[protein] + ADP + H(+). The enzyme catalyses L-threonyl-[protein] + ATP = O-phospho-L-threonyl-[protein] + ADP + H(+). With respect to regulation, activated by calcium. Autophosphorylation may play an important role in the regulation of the kinase activity. May play a role in signal transduction pathways that involve calcium as a second messenger. Functions as a regulator of the calcium-mediated abscisic acid (ABA) signaling pathway. Phosphorylates ABA-responsive transcription factors ABF1 and ABF4 in vitro. Phosphorylates the nuclear zinc finger Di19 in vitro. This Arabidopsis thaliana (Mouse-ear cress) protein is Calcium-dependent protein kinase 4 (CPK4).